The following is a 430-amino-acid chain: Tol-Pal system protein TolB (430 aa).

A signal peptide spans 1-21 (MKQALRVAFGFLILWASVLHA).

The protein belongs to the TolB family. The Tol-Pal system is composed of five core proteins: the inner membrane proteins TolA, TolQ and TolR, the periplasmic protein TolB and the outer membrane protein Pal. They form a network linking the inner and outer membranes and the peptidoglycan layer.

The protein resides in the periplasm. In terms of biological role, part of the Tol-Pal system, which plays a role in outer membrane invagination during cell division and is important for maintaining outer membrane integrity. TolB occupies a key intermediary position in the Tol-Pal system because it communicates directly with both membrane-embedded components, Pal in the outer membrane and TolA in the inner membrane. The sequence is that of Tol-Pal system protein TolB from Shigella flexneri.